The following is a 206-amino-acid chain: Dehydration-responsive element-binding protein 2D (206 aa).

The segment at 13-40 is disordered; that stretch reads ANKKQRTVQASSRKGCMRGKGGPDNASC. Residues 41-98 constitute a DNA-binding region (AP2/ERF); it reads TYKGVRQRTWGKWVAEIREPNRGARLWLGTFDTSREAALAYDSAARKLYGPEAHLNLP. Residues 102–139 are disordered; it reads RSYPKTASSPASQTTPSSNTGGKSSSDSESPCSSNEMS. Over residues 107 to 139 the composition is skewed to low complexity; that stretch reads TASSPASQTTPSSNTGGKSSSDSESPCSSNEMS.

It belongs to the AP2/ERF transcription factor family. ERF subfamily.

The protein localises to the nucleus. Putative transcriptional activator that binds specifically to the DNA sequence 5'-[AG]CCGAC-3'. Binding to the C-repeat/DRE element mediates high salinity-inducible transcription. In Arabidopsis thaliana (Mouse-ear cress), this protein is Dehydration-responsive element-binding protein 2D (DREB2D).